The following is a 233-amino-acid chain: Uracil-DNA glycosylase (233 aa).

Residue Asp-70 is the Proton acceptor of the active site.

This sequence belongs to the uracil-DNA glycosylase (UDG) superfamily. UNG family.

Its subcellular location is the cytoplasm. The enzyme catalyses Hydrolyzes single-stranded DNA or mismatched double-stranded DNA and polynucleotides, releasing free uracil.. In terms of biological role, excises uracil residues from the DNA which can arise as a result of misincorporation of dUMP residues by DNA polymerase or due to deamination of cytosine. This is Uracil-DNA glycosylase from Oleidesulfovibrio alaskensis (strain ATCC BAA-1058 / DSM 17464 / G20) (Desulfovibrio alaskensis).